Reading from the N-terminus, the 453-residue chain is uncharacterized protein (453 aa).

The Cytoplasmic segment spans residues 1 to 110 (MIQTQSTAIK…KAILRTFNHP (110 aa)). Residues 111–131 (IALTELQFLVSAVLCVGFASI) traverse the membrane as a helical segment. The Lumenal portion of the chain corresponds to 132-172 (VNLFRLPRLKHTKFSKALNSFPDGILPEYLDGNFRSSILHK). The helical transmembrane segment at 173–193 (FLVPSKLVLMTTFPMGIFQFI) threads the bilayer. At 194 to 201 (GHITSHKA) the chain is on the cytoplasmic side. The chain crosses the membrane as a helical span at residues 202–222 (VSMIPVSLVHSVKALSPIITV). Residues 223–234 (GYYKFFEHRYYN) are Lumenal-facing. A helical transmembrane segment spans residues 235-255 (SMTYYTLLLLIFGVMTTCWST). The Cytoplasmic segment spans residues 256 to 269 (HGSKRASDNKSGSS). Residues 270 to 290 (LIGLLFAFISMIIFVAQNIFA) form a helical membrane-spanning segment. Over 291 to 332 (KNILTIRRKVGILPSSSTDDVTSKEGQPSLDKTRFSPLQVDK) the chain is Lumenal. A helical transmembrane segment spans residues 333–353 (ITILFYCSCIGFSLTLLPFLT). The Cytoplasmic segment spans residues 354-371 (GELMHGGSVINDLTLETV). The chain crosses the membrane as a helical span at residues 372–392 (ALVAIHGIAHFFQAMLAFQLI). The Lumenal portion of the chain corresponds to 393 to 413 (GLLSSINYSVANIMKRIVVIS). A helical membrane pass occupies residues 414 to 434 (VALFWETKLNFFQVFGVILTI). Residues 435 to 453 (AGLYGYDKWGLSKKDGRQA) lie on the Cytoplasmic side of the membrane.

It belongs to the TPT transporter family.

It localises to the membrane. In terms of biological role, able to suppress the functional loss of YPT1. May form a channel. Protein SLY41 is not essential for cell viability. The SLY41 gene is a multicopy suppressor. This is an uncharacterized protein from Saccharomyces cerevisiae (strain ATCC 204508 / S288c) (Baker's yeast).